Here is a 178-residue protein sequence, read N- to C-terminus: 2-C-methyl-D-erythritol 2,4-cyclodiphosphate synthase (178 aa).

A divalent metal cation-binding residues include Asp24, His26, and His61. A 4-CDP-2-C-methyl-D-erythritol 2-phosphate-binding site is contributed by 24–26; it reads DSH. 150-153 provides a ligand contact to 4-CDP-2-C-methyl-D-erythritol 2-phosphate; it reads TSGE.

Belongs to the IspF family. Homotrimer. The cofactor is a divalent metal cation.

The enzyme catalyses 4-CDP-2-C-methyl-D-erythritol 2-phosphate = 2-C-methyl-D-erythritol 2,4-cyclic diphosphate + CMP. It functions in the pathway isoprenoid biosynthesis; isopentenyl diphosphate biosynthesis via DXP pathway; isopentenyl diphosphate from 1-deoxy-D-xylulose 5-phosphate: step 4/6. Its function is as follows. Involved in the biosynthesis of isopentenyl diphosphate (IPP) and dimethylallyl diphosphate (DMAPP), two major building blocks of isoprenoid compounds. Catalyzes the conversion of 4-diphosphocytidyl-2-C-methyl-D-erythritol 2-phosphate (CDP-ME2P) to 2-C-methyl-D-erythritol 2,4-cyclodiphosphate (ME-CPP) with a corresponding release of cytidine 5-monophosphate (CMP). The polypeptide is 2-C-methyl-D-erythritol 2,4-cyclodiphosphate synthase (Chlamydia trachomatis serovar L2b (strain UCH-1/proctitis)).